A 649-amino-acid polypeptide reads, in one-letter code: Replication protein E1 (649 aa).

A Nuclear localization signal motif is present at residues lysine 83 to lysine 85. Phosphoserine; by host occurs at positions 89, 93, and 107. Positions isoleucine 106–leucine 115 match the Nuclear export signal motif. The tract at residues glycine 138–arginine 169 is disordered. Residues arginine 187–aspartate 353 are DNA-binding region. The SF3 helicase domain occupies isoleucine 452–valine 602. Glycine 478–serine 485 contacts ATP. A Glycyl lysine isopeptide (Lys-Gly) (interchain with G-Cter in SUMO) cross-link involves residue lysine 559.

Belongs to the papillomaviridae E1 protein family. Can form hexamers. Interacts with E2 protein; this interaction increases E1 DNA binding specificity. Interacts with host DNA polymerase subunit POLA2. Interacts with host single stranded DNA-binding protein RPA1. Interacts with host TOP1; this interaction stimulates the enzymatic activity of TOP1. In terms of processing, phosphorylated. Post-translationally, sumoylated.

It is found in the host nucleus. It catalyses the reaction Couples ATP hydrolysis with the unwinding of duplex DNA by translocating in the 3'-5' direction.. The catalysed reaction is ATP + H2O = ADP + phosphate + H(+). Its function is as follows. ATP-dependent DNA 3'-5' helicase required for initiation of viral DNA replication. It forms a complex with the viral E2 protein. The E1-E2 complex binds to the replication origin which contains binding sites for both proteins. During the initial step, a dimer of E1 interacts with a dimer of protein E2 leading to a complex that binds the viral origin of replication with high specificity. Then, a second dimer of E1 displaces the E2 dimer in an ATP-dependent manner to form the E1 tetramer. Following this, two E1 monomers are added to each half of the site, which results in the formation of two E1 trimers on the viral ori. Subsequently, two hexamers will be created. The double hexamer acts as a bi-directional helicase machinery and unwinds the viral DNA and then recruits the host DNA polymerase to start replication. The sequence is that of Replication protein E1 from Homo sapiens (Human).